Reading from the N-terminus, the 1180-residue chain is IQ domain-containing protein N (1180 aa).

The tract at residues His-34 to Arg-78 is disordered. In terms of domain architecture, IQ 1 spans His-103–Ala-132. Disordered regions lie at residues Arg-283–Lys-324, Met-476–Arg-496, and Gln-786–Gly-820. IQ domains lie at Arg-926 to Val-955, Ile-956 to Thr-978, Ile-979 to Pro-1001, Gln-1113 to Ile-1142, and Val-1143 to Pro-1165.

Interacts with calmodulin.

Functionally, essential for spermiogenesis and fertilization. May be required for manchette assembly in elongating spermatids. The protein is IQ domain-containing protein N of Homo sapiens (Human).